Consider the following 225-residue polypeptide: Enolase-phosphatase E1 (225 aa).

It belongs to the HAD-like hydrolase superfamily. MasA/MtnC family. In terms of assembly, monomer. Mg(2+) serves as cofactor.

The catalysed reaction is 5-methylsulfanyl-2,3-dioxopentyl phosphate + H2O = 1,2-dihydroxy-5-(methylsulfanyl)pent-1-en-3-one + phosphate. It participates in amino-acid biosynthesis; L-methionine biosynthesis via salvage pathway; L-methionine from S-methyl-5-thio-alpha-D-ribose 1-phosphate: step 3/6. Its pathway is amino-acid biosynthesis; L-methionine biosynthesis via salvage pathway; L-methionine from S-methyl-5-thio-alpha-D-ribose 1-phosphate: step 4/6. Its function is as follows. Bifunctional enzyme that catalyzes the enolization of 2,3-diketo-5-methylthiopentyl-1-phosphate (DK-MTP-1-P) into the intermediate 2-hydroxy-3-keto-5-methylthiopentenyl-1-phosphate (HK-MTPenyl-1-P), which is then dephosphorylated to form the acireductone 1,2-dihydroxy-3-keto-5-methylthiopentene (DHK-MTPene). The polypeptide is Enolase-phosphatase E1 (Shewanella woodyi (strain ATCC 51908 / MS32)).